Here is a 355-residue protein sequence, read N- to C-terminus: Galectin-9 (355 aa).

Galectin domains follow at residues 17–148 (FSGT…ISFQ) and 227–355 (FITT…HVQT). A beta-D-galactoside contacts are provided by residues N48, H61, R65, N75, 82–88 (WGPEERK), H267, R271, T281, and 287–293 (WGSEERS).

In terms of assembly, monomer. Peripheral blood leukocytes and lymphatic tissues. Expressed in lung, liver, breast and kidney with higher levels in tumor endothelial cells than normal endothelium (at protein level). Expressed in trophoblast cells in decidua and placenta in pregnancy (at protein level). Isoform 2 is the most abundant isoform expressed in endothelial cells. Upon endothelial cell activation isoform 2 expression decreases while expression of isoform 3 and isoform 5 increases. Isoform 4 decreases in pathological pregnancy.

It localises to the cytoplasm. The protein localises to the nucleus. Its subcellular location is the secreted. Functionally, binds galactosides. Has high affinity for the Forssman pentasaccharide. Ligand for HAVCR2/TIM3. Binding to HAVCR2 induces T-helper type 1 lymphocyte (Th1) death. Also stimulates bactericidal activity in infected macrophages by causing macrophage activation and IL1B secretion which restricts intracellular bacterial growth. Ligand for P4HB; the interaction retains P4HB at the cell surface of Th2 T-helper cells, increasing disulfide reductase activity at the plasma membrane, altering the plasma membrane redox state and enhancing cell migration. Ligand for CD44; the interaction enhances binding of SMAD3 to the FOXP3 promoter, leading to up-regulation of FOXP3 expression and increased induced regulatory T (iTreg) cell stability and suppressive function. Promotes ability of mesenchymal stromal cells to suppress T-cell proliferation. Expands regulatory T-cells and induces cytotoxic T-cell apoptosis following virus infection. Activates ERK1/2 phosphorylation inducing cytokine (IL-6, IL-8, IL-12) and chemokine (CCL2) production in mast and dendritic cells. Inhibits degranulation and induces apoptosis of mast cells. Induces maturation and migration of dendritic cells. Inhibits natural killer (NK) cell function. Can transform NK cell phenotype from peripheral to decidual during pregnancy. Astrocyte derived galectin-9 enhances microglial TNF production. May play a role in thymocyte-epithelial interactions relevant to the biology of the thymus. May provide the molecular basis for urate flux across cell membranes, allowing urate that is formed during purine metabolism to efflux from cells and serving as an electrogenic transporter that plays an important role in renal and gastrointestinal urate excretion. Highly selective to the anion urate. Its function is as follows. Acts as an eosinophil chemoattractant. It also inhibits angiogenesis. Suppresses IFNG production by natural killer cells. The sequence is that of Galectin-9 (LGALS9) from Homo sapiens (Human).